Consider the following 568-residue polypeptide: Protein NDNF (568 aa).

The N-terminal stretch at 1–19 (MELFYWCLLCLLLPLTSRT) is a signal peptide. 2 Fibronectin type-III domains span residues 261–331 (NLGK…VGAF) and 445–564 (PSLP…IVKT). Residues Asn322 and Asn488 are each glycosylated (N-linked (GlcNAc...) asparagine).

As to quaternary structure, binds heparin and chondroitin sulfate. In terms of processing, O-glycosylated; contains heparan sulfate and chondroitin sulfate. Post-translationally, N-glycosylated. Expressed in brain and spinal cord with no expression detected in heart, kidney or liver. Expressed by neurons but not by astrocytes. In the brain, detected in the cerebrum, cerebellum and olfactory bulbs. In the cerebral cortex, highly expressed in Cajal-Retzius cells. Also expressed in hippocampal neurons and in Purkinje and granule cells of the cerebellum (at protein level). Expressed in neurons along the GnRH migratory route.

Its subcellular location is the secreted. In terms of biological role, secretory protein that plays a role in various cellular processes. Acts as a chemorepellent acting on gonadotropin-releasing hormone (GnRH) expressing neurons regulating their migration to the hypothalamus. Also promotes neuron migration, growth and survival as well as neurite outgrowth and is involved in the development of the olfactory system. May also act through the regulation of growth factors activity and downstream signaling. Also regulates extracellular matrix assembly and cell adhesiveness. Promotes endothelial cell survival, vessel formation and plays an important role in the process of revascularization through NOS3-dependent mechanisms. This chain is Protein NDNF (Ndnf), found in Mus musculus (Mouse).